Consider the following 525-residue polypeptide: Lysine--tRNA ligase (525 aa).

Mg(2+) is bound by residues E419 and E426.

It belongs to the class-II aminoacyl-tRNA synthetase family. As to quaternary structure, homodimer. The cofactor is Mg(2+).

The protein resides in the cytoplasm. It catalyses the reaction tRNA(Lys) + L-lysine + ATP = L-lysyl-tRNA(Lys) + AMP + diphosphate. This is Lysine--tRNA ligase (lysS) from Deinococcus radiodurans (strain ATCC 13939 / DSM 20539 / JCM 16871 / CCUG 27074 / LMG 4051 / NBRC 15346 / NCIMB 9279 / VKM B-1422 / R1).